A 553-amino-acid polypeptide reads, in one-letter code: Transcriptional regulator HilA (553 aa).

Positions 11 to 107 (NKKFVFDDFI…LYGQGYRFNR (97 aa)) form a DNA-binding region, ompR/PhoB-type. Aspartate 62 carries the post-translational modification 4-aspartylphosphate. The stretch at 372–405 (ADIKYYYGWNLFMAGQLEEALQTINECLKLDPTR) is one TPR repeat.

Functionally, the main transcriptional regulator of the Salmonella pathogenicity island 1 (SPI1) gene expression. Activates the expression of invasion genes by a direct action at their promoters and also indirectly by increasing the level of InvF. Also binds upstream of prgH and directly activates the expression of prgHIJK operon. This is Transcriptional regulator HilA (hilA) from Salmonella typhimurium (strain LT2 / SGSC1412 / ATCC 700720).